The sequence spans 583 residues: Immunity-related GTPase family Q protein (583 aa).

Cysteine 152 and cysteine 158 are joined by a disulfide. Residues 155–179 (SDRCEELERLQVVLRTQAEALQRLL) adopt a coiled-coil conformation. The LIR 1 motif lies at 186-189 (FEVL). Threonine 203 is subject to Phosphothreonine. The IRG-type G domain occupies 223-409 (ARLDLAVAGT…PGLGTWLQHA (187 aa)). The tract at residues 322 to 373 (APLVGVRTDGQGEDPPEVLEEEKAQNASDGNSGDARSEGKKAGIGDSGCTAA) is disordered. The span at 332–341 (QGEDPPEVLE) shows a compositional bias: acidic residues. The LIR 2 signature appears at 381 to 384 (WEVL).

The protein belongs to the TRAFAC class dynamin-like GTPase superfamily. IRG family. As to quaternary structure, interacts (via LIR motif 1) with GABARAPL2. Interacts (via LIR motif 2) with MAP1LC3B/LC3B.

The protein localises to the lysosome. Its subcellular location is the cytoplasmic vesicle. It is found in the autophagosome. In terms of biological role, autophagy receptor that specifically promotes clearance of misfolded MHC class I molecules by targeting them to the lysosome for degradation. Acts as a molecular adapter that specifically recognizes and binds (1) misfolded MHC class I molecules following their ubiquitination, as well as (2) autophagy-related proteins, promoting the recruitment of misfolded MHC class I molecules to autophagy machinery for degradation. Degradation of misfolded MHC class I molecules is essential to prevent accumulation of defective MHC class I complexes at the surface of CD8(+) T-cells and prevent a stronger T-cell-mediated response. In contrast to other members of the family, does not show GTPase activity. This is Immunity-related GTPase family Q protein (Irgq) from Mus musculus (Mouse).